Reading from the N-terminus, the 201-residue chain is Small ribosomal subunit protein uS4c (201 aa).

The segment at 19–38 (PGLTSKSPKAGSDLRNQLRS) is disordered. The region spanning 89–149 (MRLDNILFRL…DEQKSRALIQ (61 aa)) is the S4 RNA-binding domain.

The protein belongs to the universal ribosomal protein uS4 family. In terms of assembly, part of the 30S ribosomal subunit. Contacts protein S5. The interaction surface between S4 and S5 is involved in control of translational fidelity.

It is found in the plastid. The protein localises to the chloroplast. Functionally, one of the primary rRNA binding proteins, it binds directly to 16S rRNA where it nucleates assembly of the body of the 30S subunit. Its function is as follows. With S5 and S12 plays an important role in translational accuracy. This chain is Small ribosomal subunit protein uS4c (rps4), found in Platanus occidentalis (Sycamore).